We begin with the raw amino-acid sequence, 304 residues long: MKIAFFSSGTFGLPVLEELKKENHEIVLITKVDAPSGRGLKLQPSPPAVVAEALQIPIVKVNSLKNDFIEWYFSQGFDVAIVVDFGFYIPKQLFQADKPVMVNIHPSLLPKYRGPNPIRRAICSGELETGVTLIKISEKMDEGDIYLQERVLIDPDDDYVSLTPKLQHVSMELLKKFFLELKQGNLRAFPQLGDPSYAPKFTPDELWIDWQKPAHDIQNQVRALADVGAKTTLGSKLVKIFKVRISGMEDSLPPGHYVAEKESLYVGTGQGSLEILSLQQEGRKKQDAASFVKGLREKEGVFGG.

107–110 (SLLP) is a (6S)-5,6,7,8-tetrahydrofolate binding site.

Belongs to the Fmt family.

It carries out the reaction L-methionyl-tRNA(fMet) + (6R)-10-formyltetrahydrofolate = N-formyl-L-methionyl-tRNA(fMet) + (6S)-5,6,7,8-tetrahydrofolate + H(+). Attaches a formyl group to the free amino group of methionyl-tRNA(fMet). The formyl group appears to play a dual role in the initiator identity of N-formylmethionyl-tRNA by promoting its recognition by IF2 and preventing the misappropriation of this tRNA by the elongation apparatus. The protein is Methionyl-tRNA formyltransferase of Coprothermobacter proteolyticus (strain ATCC 35245 / DSM 5265 / OCM 4 / BT).